A 306-amino-acid polypeptide reads, in one-letter code: Ornithine carbamoyltransferase (306 aa).

Carbamoyl phosphate contacts are provided by residues Ser-46–Thr-49, Gln-73, Arg-97, and His-124–Gln-127. L-ornithine contacts are provided by residues Asn-156, Asp-220, and Ser-224–Met-225. Carbamoyl phosphate is bound by residues Cys-260 to Leu-261 and Arg-288.

Belongs to the aspartate/ornithine carbamoyltransferase superfamily. OTCase family.

It is found in the cytoplasm. It carries out the reaction carbamoyl phosphate + L-ornithine = L-citrulline + phosphate + H(+). It participates in amino-acid degradation; L-arginine degradation via ADI pathway; carbamoyl phosphate from L-arginine: step 2/2. Reversibly catalyzes the transfer of the carbamoyl group from carbamoyl phosphate (CP) to the N(epsilon) atom of ornithine (ORN) to produce L-citrulline. This chain is Ornithine carbamoyltransferase, found in Campylobacter jejuni subsp. doylei (strain ATCC BAA-1458 / RM4099 / 269.97).